The chain runs to 55 residues: Large ribosomal subunit protein bL33 (55 aa).

Belongs to the bacterial ribosomal protein bL33 family.

The chain is Large ribosomal subunit protein bL33 from Aromatoleum aromaticum (strain DSM 19018 / LMG 30748 / EbN1) (Azoarcus sp. (strain EbN1)).